The following is a 400-amino-acid chain: Argininosuccinate synthase (400 aa).

ATP is bound by residues 10-18 (AYSGGVDTS) and Ala38. Residue Tyr89 coordinates L-citrulline. Residue Gly119 participates in ATP binding. Thr121, Asn125, and Asp126 together coordinate L-aspartate. L-citrulline is bound at residue Asn125. L-citrulline is bound by residues Arg129, Ser177, Ser186, Glu262, and Tyr274.

This sequence belongs to the argininosuccinate synthase family. Type 1 subfamily. Homotetramer.

It is found in the cytoplasm. The catalysed reaction is L-citrulline + L-aspartate + ATP = 2-(N(omega)-L-arginino)succinate + AMP + diphosphate + H(+). It functions in the pathway amino-acid biosynthesis; L-arginine biosynthesis; L-arginine from L-ornithine and carbamoyl phosphate: step 2/3. Activity decreases to 53.9% and 18.4% in the presence of 1 mM and 5 mM arginine, respectively. Activity also decreases to 80.1%, 78.1% and 92.1% in the presence of 5 mM ornithine, lysine and succinate, respectively. Activity does not decrease in the presence of glutamate, glutamine or asparagine. Functionally, catalyzes the condensation of citrulline and aspartate into argininosuccinate, the immediate precursor of arginine. SyArgG is the rate-limiting step in arginine biosynthesis in Synechocystis PCC 6803. This chain is Argininosuccinate synthase, found in Synechocystis sp. (strain ATCC 27184 / PCC 6803 / Kazusa).